Reading from the N-terminus, the 439-residue chain is Microfibrillar-associated protein 1 (439 aa).

Disordered stretches follow at residues 1–27 (MSVP…NEKG) and 39–200 (YVSG…PRLK). Ser2 bears the N-acetylserine mark. Ser52 and Ser53 each carry phosphoserine. Residues 61-70 (QFIKKAKEQE) are compositionally biased toward basic and acidic residues. Lys67 participates in a covalent cross-link: Glycyl lysine isopeptide (Lys-Gly) (interchain with G-Cter in SUMO2). Positions 71-81 (AEPEEQEEDSS) are enriched in acidic residues. 5 positions are modified to phosphoserine: Ser94, Ser116, Ser118, Ser132, and Ser133. Acidic residues-rich tracts occupy residues 112–122 (VVGESDSEVEG) and 131–144 (DSSE…DDEE). Basic and acidic residues predominate over residues 145 to 163 (IERRRGMMRQRAQERKNEE). Residues 178 to 195 (ESESESEYEEYTDSEDEM) show a composition bias toward acidic residues. A Glycyl lysine isopeptide (Lys-Gly) (interchain with G-Cter in SUMO2) cross-link involves residue Lys249. A Phosphothreonine modification is found at Thr267. A Glycyl lysine isopeptide (Lys-Gly) (interchain with G-Cter in SUMO2) cross-link involves residue Lys357. Ser361 bears the Phosphoserine mark. Glycyl lysine isopeptide (Lys-Gly) (interchain with G-Cter in SUMO2) cross-links involve residues Lys371, Lys381, Lys415, and Lys418. Ser432 is modified (phosphoserine).

This sequence belongs to the MFAP1 family. As to quaternary structure, component of the spliceosome B complex. Interacts with PRPF38A (via N-terminal interaction domain).

Its subcellular location is the nucleus. In terms of biological role, involved in pre-mRNA splicing as a component of the spliceosome. The sequence is that of Microfibrillar-associated protein 1 from Homo sapiens (Human).